The following is a 141-amino-acid chain: Large ribosomal subunit protein uL11 (141 aa).

Belongs to the universal ribosomal protein uL11 family. In terms of assembly, part of the ribosomal stalk of the 50S ribosomal subunit. Interacts with L10 and the large rRNA to form the base of the stalk. L10 forms an elongated spine to which L12 dimers bind in a sequential fashion forming a multimeric L10(L12)X complex. In terms of processing, one or more lysine residues are methylated.

Functionally, forms part of the ribosomal stalk which helps the ribosome interact with GTP-bound translation factors. The chain is Large ribosomal subunit protein uL11 from Campylobacter concisus (strain 13826).